Reading from the N-terminus, the 421-residue chain is BEN domain-containing protein 5 (421 aa).

Residue K133 is modified to N6-acetyllysine. Positions 180–243 (RALYEELLRN…LNRRLQDVLL (64 aa)) form a coiled coil. K258 participates in a covalent cross-link: Glycyl lysine isopeptide (Lys-Gly) (interchain with G-Cter in SUMO2). A BEN domain is found at 302 to 408 (GSGIWVDEEK…EKIMDINKSC (107 aa)).

Its function is as follows. Acts as a transcriptional repressor. The polypeptide is BEN domain-containing protein 5 (BEND5) (Homo sapiens (Human)).